A 103-amino-acid polypeptide reads, in one-letter code: Large ribosomal subunit protein uL24 (103 aa).

It belongs to the universal ribosomal protein uL24 family. In terms of assembly, part of the 50S ribosomal subunit.

In terms of biological role, one of two assembly initiator proteins, it binds directly to the 5'-end of the 23S rRNA, where it nucleates assembly of the 50S subunit. One of the proteins that surrounds the polypeptide exit tunnel on the outside of the subunit. The sequence is that of Large ribosomal subunit protein uL24 from Ruegeria pomeroyi (strain ATCC 700808 / DSM 15171 / DSS-3) (Silicibacter pomeroyi).